A 468-amino-acid chain; its full sequence is 6-phosphogluconate dehydrogenase, decarboxylating (468 aa).

NADP(+) contacts are provided by residues Gly9 to Gly14, Asn32 to Ser34, Val73 to Ala75, and Asn101. Substrate-binding positions include Asn101 and Ser127–Gly129. The active-site Proton acceptor is the Lys182. A substrate-binding site is contributed by His185–Asn186. Glu189 acts as the Proton donor in catalysis. 5 residues coordinate substrate: Tyr190, Lys259, Arg286, Arg444, and His450.

This sequence belongs to the 6-phosphogluconate dehydrogenase family. Homodimer.

It carries out the reaction 6-phospho-D-gluconate + NADP(+) = D-ribulose 5-phosphate + CO2 + NADPH. It participates in carbohydrate degradation; pentose phosphate pathway; D-ribulose 5-phosphate from D-glucose 6-phosphate (oxidative stage): step 3/3. Its function is as follows. Catalyzes the oxidative decarboxylation of 6-phosphogluconate to ribulose 5-phosphate and CO(2), with concomitant reduction of NADP to NADPH. The sequence is that of 6-phosphogluconate dehydrogenase, decarboxylating (gnd) from Staphylococcus aureus (strain Mu50 / ATCC 700699).